The primary structure comprises 382 residues: Innexin-8 (382 aa).

4 consecutive transmembrane segments (helical) span residues 29–49, 103–123, 187–207, and 270–290; these read LITA…TYVG, QWSS…KFLW, VIKI…AIFL, and IFLF…IAHF.

This sequence belongs to the pannexin family.

It localises to the cell membrane. The protein resides in the cell junction. The protein localises to the gap junction. Functionally, structural component of the gap junctions. The protein is Innexin-8 (inx-8) of Caenorhabditis elegans.